The chain runs to 440 residues: Chromosome partition protein MukF (440 aa).

A leucine-zipper region spans residues 208 to 236 (LSETSGTLRELQDTLEAAGDKLQANLLRI).

It belongs to the MukF family. In terms of assembly, interacts, and probably forms a ternary complex, with MukE and MukB via its C-terminal region. The complex formation is stimulated by calcium or magnesium. It is required for an interaction between MukE and MukB.

Its subcellular location is the cytoplasm. It localises to the nucleoid. Involved in chromosome condensation, segregation and cell cycle progression. May participate in facilitating chromosome segregation by condensation DNA from both sides of a centrally located replisome during cell division. Not required for mini-F plasmid partitioning. Probably acts via its interaction with MukB and MukE. Overexpression results in anucleate cells. It has a calcium binding activity. The protein is Chromosome partition protein MukF of Photorhabdus laumondii subsp. laumondii (strain DSM 15139 / CIP 105565 / TT01) (Photorhabdus luminescens subsp. laumondii).